The sequence spans 235 residues: Orotidine 5'-phosphate decarboxylase (235 aa).

Substrate contacts are provided by residues Asp11, Lys33, 60 to 69 (DLKFHDIPNT), Thr119, Arg180, Gln189, Gly209, and Arg210. Lys62 functions as the Proton donor in the catalytic mechanism.

It belongs to the OMP decarboxylase family. Type 1 subfamily. Homodimer.

It carries out the reaction orotidine 5'-phosphate + H(+) = UMP + CO2. It participates in pyrimidine metabolism; UMP biosynthesis via de novo pathway; UMP from orotate: step 2/2. Its function is as follows. Catalyzes the decarboxylation of orotidine 5'-monophosphate (OMP) to uridine 5'-monophosphate (UMP). The polypeptide is Orotidine 5'-phosphate decarboxylase (Alkalilimnicola ehrlichii (strain ATCC BAA-1101 / DSM 17681 / MLHE-1)).